A 235-amino-acid polypeptide reads, in one-letter code: Small ribosomal subunit protein uS2 (235 aa).

The protein belongs to the universal ribosomal protein uS2 family.

In Caldanaerobacter subterraneus subsp. tengcongensis (strain DSM 15242 / JCM 11007 / NBRC 100824 / MB4) (Thermoanaerobacter tengcongensis), this protein is Small ribosomal subunit protein uS2.